Reading from the N-terminus, the 129-residue chain is Small ribosomal subunit protein uS11 (129 aa).

Residues 109-129 (VDDTPVPHNGCRPKKKFRKAS) are disordered. Residues 119–129 (CRPKKKFRKAS) are compositionally biased toward basic residues.

The protein belongs to the universal ribosomal protein uS11 family. Part of the 30S ribosomal subunit. Interacts with proteins S7 and S18. Binds to the C-terminus of IF-3; however exactly how IF-3 interacts with the 30S subunit is unclear.

Functionally, located on the upper part of the platform of the 30S subunit, where it bridges several disparate RNA helices of the 16S rRNA. Forms part of the Shine-Dalgarno cleft in the 70S ribosome. The protein is Small ribosomal subunit protein uS11 (rpsK) of Thermus thermophilus (strain ATCC BAA-163 / DSM 7039 / HB27).